Here is a 291-residue protein sequence, read N- to C-terminus: Phytanoyl-CoA dioxygenase domain-containing protein 1 (291 aa).

Phosphothreonine is present on Thr55. Residues Lys102, Met141, 156-158 (HQD), and Trp174 each bind 2-oxoglutarate. The Fe cation site is built by His156 and Asp158. Residue His246 coordinates Fe cation. 2-oxoglutarate contacts are provided by Ser248 and Arg257.

The protein belongs to the PhyH family. PHYHD1 subfamily. Fe cation serves as cofactor.

Its function is as follows. 2-oxoglutarate(2OG)-dependent dioxygenase that catalyzes the conversion of 2-oxoglutarate to succinate and CO(2) in an iron-dependent manner. However, does not couple 2OG turnover to the hydroxylation of acyl-coenzyme A derivatives, implying that it is not directly involved in phytanoyl coenzyme-A metabolism. Does not show detectable activity towards fatty acid CoA thioesters. The polypeptide is Phytanoyl-CoA dioxygenase domain-containing protein 1 (Mus musculus (Mouse)).